A 445-amino-acid polypeptide reads, in one-letter code: Tubulin beta chain (445 aa).

The MREI motif signature appears at 1–4 (MREI). Gln-11 serves as a coordination point for GTP. Ser-40 bears the Phosphoserine mark. Lys-58 is modified (N6-acetyllysine; alternate). Lys-58 is subject to N6-succinyllysine; alternate. Lys-58 is covalently cross-linked (Glycyl lysine isopeptide (Lys-Gly) (interchain with G-Cter in ubiquitin); alternate). Residues Glu-69, Ser-138, Gly-142, Thr-143, and Gly-144 each contribute to the GTP site. Position 69 (Glu-69) interacts with Mg(2+). Ser-172 is subject to Phosphoserine; by CDK1. Asn-204 and Asn-226 together coordinate GTP. Phosphothreonine occurs at positions 285 and 290. Position 318 is an omega-N-methylarginine (Arg-318). Lys-324 participates in a covalent cross-link: Glycyl lysine isopeptide (Lys-Gly) (interchain with G-Cter in ubiquitin). The tract at residues 424-445 (QYQDATADEQGEFEEEGEEDEA) is disordered. The span at 429-445 (TADEQGEFEEEGEEDEA) shows a compositional bias: acidic residues. Residue Glu-438 is modified to 5-glutamyl polyglutamate.

It belongs to the tubulin family. Dimer of alpha and beta chains. A typical microtubule is a hollow water-filled tube with an outer diameter of 25 nm and an inner diameter of 15 nM. Alpha-beta heterodimers associate head-to-tail to form protofilaments running lengthwise along the microtubule wall with the beta-tubulin subunit facing the microtubule plus end conferring a structural polarity. Microtubules usually have 13 protofilaments but different protofilament numbers can be found in some organisms and specialized cells. Interacts with NCKAP5L. Requires Mg(2+) as cofactor. Post-translationally, some glutamate residues at the C-terminus are polyglycylated, resulting in polyglycine chains on the gamma-carboxyl group. Glycylation is mainly limited to tubulin incorporated into axonemes (cilia and flagella) whereas glutamylation is prevalent in neuronal cells, centrioles, axonemes, and the mitotic spindle. Both modifications can coexist on the same protein on adjacent residues, and lowering polyglycylation levels increases polyglutamylation, and reciprocally. Cilia and flagella glycylation is required for their stability and maintenance. Flagella glycylation controls sperm motility. In terms of processing, some glutamate residues at the C-terminus are polyglutamylated, resulting in polyglutamate chains on the gamma-carboxyl group. Polyglutamylation plays a key role in microtubule severing by spastin (SPAST). SPAST preferentially recognizes and acts on microtubules decorated with short polyglutamate tails: severing activity by SPAST increases as the number of glutamates per tubulin rises from one to eight, but decreases beyond this glutamylation threshold. Phosphorylated on Ser-172 by CDK1 during the cell cycle, from metaphase to telophase, but not in interphase. This phosphorylation inhibits tubulin incorporation into microtubules.

Its subcellular location is the cytoplasm. The protein resides in the cytoskeleton. Functionally, tubulin is the major constituent of microtubules, a cylinder consisting of laterally associated linear protofilaments composed of alpha- and beta-tubulin heterodimers. Microtubules grow by the addition of GTP-tubulin dimers to the microtubule end, where a stabilizing cap forms. Below the cap, tubulin dimers are in GDP-bound state, owing to GTPase activity of alpha-tubulin. The chain is Tubulin beta chain from Sus scrofa (Pig).